Reading from the N-terminus, the 466-residue chain is Neuraminidase (466 aa).

The Intravirion segment spans residues 1-11; that stretch reads MLPSTIQTLTL. A helical membrane pass occupies residues 12 to 34; sequence FLTSGGVLLSLYVSASLSYLLYS. Residues 13 to 35 form an involved in apical transport and lipid raft association region; sequence LTSGGVLLSLYVSASLSYLLYSD. Topologically, residues 35 to 466 are virion surface; the sequence is DILLKFSPTK…DTVTGVDMAL (432 aa). The tract at residues 38 to 86 is hypervariable stalk region; it reads LKFSPTKRTAPTMSLECVNVSNAQAVNHSATKEMTFLLPEPEWTYPRLS. 2 N-linked (GlcNAc...) asparagine; by host glycosylation sites follow: N56 and N64. Intrachain disulfides connect C87-C420, C122-C127, C182-C229, C231-C236, C277-C291, C279-C289, C318-C337, and C424-C447. The segment at 89-466 is head of neuraminidase; sequence GSTFQKALLI…DTVTGVDMAL (378 aa). Substrate is bound at residue R116. Residue N144 is glycosylated (N-linked (GlcNAc...) asparagine; by host). The active-site Proton donor/acceptor is D149. A substrate-binding site is contributed by R150. 275–276 contributes to the substrate binding site; the sequence is EE. Residue N284 is glycosylated (N-linked (GlcNAc...) asparagine; by host). Substrate is bound at residue R292. Positions 293 and 324 each coordinate Ca(2+). R374 lines the substrate pocket. Y409 functions as the Nucleophile in the catalytic mechanism.

Belongs to the glycosyl hydrolase 34 family. Homotetramer. It depends on Ca(2+) as a cofactor. Post-translationally, N-glycosylated.

Its subcellular location is the virion membrane. It is found in the host apical cell membrane. The enzyme catalyses Hydrolysis of alpha-(2-&gt;3)-, alpha-(2-&gt;6)-, alpha-(2-&gt;8)- glycosidic linkages of terminal sialic acid residues in oligosaccharides, glycoproteins, glycolipids, colominic acid and synthetic substrates.. Its activity is regulated as follows. Inhibited by the neuraminidase inhibitors zanamivir (Relenza) and oseltamivir (Tamiflu). These drugs interfere with the release of progeny virus from infected cells and are effective against all influenza strains. Resistance to neuraminidase inhibitors is quite rare. Its function is as follows. Catalyzes the removal of terminal sialic acid residues from viral and cellular glycoconjugates. Cleaves off the terminal sialic acids on the glycosylated HA during virus budding to facilitate virus release. Additionally helps virus spread through the circulation by further removing sialic acids from the cell surface. These cleavages prevent self-aggregation and ensure the efficient spread of the progeny virus from cell to cell. Otherwise, infection would be limited to one round of replication. Described as a receptor-destroying enzyme because it cleaves a terminal sialic acid from the cellular receptors. May facilitate viral invasion of the upper airways by cleaving the sialic acid moieties on the mucin of the airway epithelial cells. Likely to plays a role in the budding process through its association with lipid rafts during intracellular transport. May additionally display a raft-association independent effect on budding. Plays a role in the determination of host range restriction on replication and virulence. Sialidase activity in late endosome/lysosome traffic seems to enhance virus replication. This chain is Neuraminidase, found in Influenza B virus (strain B/Maryland/1959).